The chain runs to 536 residues: MAKDPGRVLIFDTTLRDGEQSPGASLNLEEKLAIAQQLARLGVDIIEAGFPYASQGDFTAVQRIAEQVGGEEGPIICGLARASKADIKACGEAIAPAPKKRIHTFIATSDIHLEHKLRKTREEVIQIVPEMVHYAKSFSEDVEFSCEDAARSDPDFLYELIELAISAGAGTINIPDTVGYITPSEFGELIQGIDANVPNIDEAILSVHGHNDLGLAVANFLEAIKRGARQLECTINGIGERAGNAALEELVMALHVRRSFYNPFFGRDPESPTPLTAIRTEEITKTSRLVSNLTGMVVQPNKAIVGANAFAHESGIHQDGVLKNRLTYEIVDAKTVGLTDNRISLGKLSGRSAVRARLEELGYDLTRDDLNEAFAKFKDLADRKREITDRDLEAIVSEQVMQPDARFQLQLVQVSCGTTLKPTATVTLADQDGTEQTAVALGTGPVDAVCKALDSLAGESNELIEFSVKSVTEGIDALGEVTIRLRREGKIFSGHSADTDVVVAAAQAYVNALNRLIYFEKKNPIHPQHDLIKANL.

The 266-residue stretch at valine 8–threonine 273 folds into the Pyruvate carboxyltransferase domain. Residues aspartate 17, histidine 208, histidine 210, and asparagine 244 each contribute to the Mn(2+) site. The segment at glutamine 408–leucine 536 is regulatory domain.

Belongs to the alpha-IPM synthase/homocitrate synthase family. LeuA type 1 subfamily. Homodimer. Requires Mn(2+) as cofactor.

Its subcellular location is the cytoplasm. The catalysed reaction is 3-methyl-2-oxobutanoate + acetyl-CoA + H2O = (2S)-2-isopropylmalate + CoA + H(+). It participates in amino-acid biosynthesis; L-leucine biosynthesis; L-leucine from 3-methyl-2-oxobutanoate: step 1/4. Functionally, catalyzes the condensation of the acetyl group of acetyl-CoA with 3-methyl-2-oxobutanoate (2-ketoisovalerate) to form 3-carboxy-3-hydroxy-4-methylpentanoate (2-isopropylmalate). This chain is 2-isopropylmalate synthase, found in Prochlorococcus marinus (strain MIT 9211).